Reading from the N-terminus, the 501-residue chain is Cytochrome P450 3A6 (501 aa).

A heme-binding site is contributed by Cys-440.

This sequence belongs to the cytochrome P450 family. The cofactor is heme.

It localises to the endoplasmic reticulum membrane. The protein resides in the microsome membrane. The enzyme catalyses an organic molecule + reduced [NADPH--hemoprotein reductase] + O2 = an alcohol + oxidized [NADPH--hemoprotein reductase] + H2O + H(+). Functionally, exhibits progesterone 6 beta-hydroxylase activity. The sequence is that of Cytochrome P450 3A6 (CYP3A6) from Oryctolagus cuniculus (Rabbit).